The chain runs to 217 residues: Deoxyribose-phosphate aldolase (217 aa).

The active-site Proton donor/acceptor is the Asp-95. Lys-156 serves as the catalytic Schiff-base intermediate with acetaldehyde. Residue Lys-184 is the Proton donor/acceptor of the active site.

The protein belongs to the DeoC/FbaB aldolase family. DeoC type 1 subfamily.

It localises to the cytoplasm. It catalyses the reaction 2-deoxy-D-ribose 5-phosphate = D-glyceraldehyde 3-phosphate + acetaldehyde. The protein operates within carbohydrate degradation; 2-deoxy-D-ribose 1-phosphate degradation; D-glyceraldehyde 3-phosphate and acetaldehyde from 2-deoxy-alpha-D-ribose 1-phosphate: step 2/2. In terms of biological role, catalyzes a reversible aldol reaction between acetaldehyde and D-glyceraldehyde 3-phosphate to generate 2-deoxy-D-ribose 5-phosphate. The polypeptide is Deoxyribose-phosphate aldolase (Thermosynechococcus vestitus (strain NIES-2133 / IAM M-273 / BP-1)).